A 70-amino-acid polypeptide reads, in one-letter code: Small ribosomal subunit protein bS21 (70 aa).

The disordered stretch occupies residues 39–70; it reads EKPTTERKRKKAAAVSRTRKRLRSQMLPKKLY. The segment covering 45–61 has biased composition (basic residues); sequence RKRKKAAAVSRTRKRLR.

It belongs to the bacterial ribosomal protein bS21 family.

This Ralstonia nicotianae (strain ATCC BAA-1114 / GMI1000) (Ralstonia solanacearum) protein is Small ribosomal subunit protein bS21.